The primary structure comprises 651 residues: Protein numb homolog (651 aa).

The 161-residue stretch at R33–G193 folds into the PID domain. Residue T102 is modified to Phosphothreonine; by AAK1. S194 bears the Phosphoserine mark. The disordered stretch occupies residues S228 to M255. Over residues T235–S252 the composition is skewed to low complexity. Phosphothreonine is present on T243. Residue S244 is modified to Phosphoserine. 2 positions are modified to phosphoserine; by CaMK1: S276 and S295. Disordered regions lie at residues Q419 to Q483 and L623 to L651. S425 carries the post-translational modification Phosphoserine. T436 carries the post-translational modification Phosphothreonine. Residues T436–K449 are compositionally biased toward basic and acidic residues. A Phosphoserine modification is found at S438. A compositionally biased stretch (low complexity) spans A453–V466. Residues R630–Q644 are compositionally biased toward polar residues. Position 634 is a phosphoserine (S634).

In terms of assembly, interacts with SIAH1. Interacts with LNX. Interacts with CDH1. Interacts with TFAP2A and TFAP2B. Interacts with RALBP1 in a complex also containing EPN1 and TFAP2A during interphase and mitosis. Interacts with AAK1. May interact with DUOXA1. Phosphorylated on Ser-276 and Ser-295 by CaMK1. In terms of processing, isoform 1 and isoform 2 are ubiquitinated by LNX leading to their subsequent proteasomal degradation. Ubiquitinated; mediated by SIAH1 and leading to its subsequent proteasomal degradation.

Its subcellular location is the cell membrane. It localises to the endosome membrane. In terms of biological role, regulates clathrin-mediated receptor endocytosis. Plays a role in the process of neurogenesis. Required throughout embryonic neurogenesis to maintain neural progenitor cells, also called radial glial cells (RGCs), by allowing their daughter cells to choose progenitor over neuronal cell fate. Not required for the proliferation of neural progenitor cells before the onset of neurogenesis. Also involved postnatally in the subventricular zone (SVZ) neurogenesis by regulating SVZ neuroblasts survival and ependymal wall integrity. May also mediate local repair of brain ventricular wall damage. The chain is Protein numb homolog from Homo sapiens (Human).